The primary structure comprises 212 residues: uncharacterized protein (212 aa).

Residues 186–206 (VITLISFMLFSILFFLIFLIV) form a helical membrane-spanning segment.

It localises to the membrane. This is an uncharacterized protein from Mycoplasma genitalium (strain ATCC 33530 / DSM 19775 / NCTC 10195 / G37) (Mycoplasmoides genitalium).